The primary structure comprises 262 residues: Thiazole synthase (262 aa).

The Schiff-base intermediate with DXP role is filled by Lys96. Residues Gly157, 184-185 (AG), and 206-207 (NT) each bind 1-deoxy-D-xylulose 5-phosphate.

It belongs to the ThiG family. Homotetramer. Forms heterodimers with either ThiH or ThiS.

The protein resides in the cytoplasm. The catalysed reaction is [ThiS sulfur-carrier protein]-C-terminal-Gly-aminoethanethioate + 2-iminoacetate + 1-deoxy-D-xylulose 5-phosphate = [ThiS sulfur-carrier protein]-C-terminal Gly-Gly + 2-[(2R,5Z)-2-carboxy-4-methylthiazol-5(2H)-ylidene]ethyl phosphate + 2 H2O + H(+). Its pathway is cofactor biosynthesis; thiamine diphosphate biosynthesis. Functionally, catalyzes the rearrangement of 1-deoxy-D-xylulose 5-phosphate (DXP) to produce the thiazole phosphate moiety of thiamine. Sulfur is provided by the thiocarboxylate moiety of the carrier protein ThiS. In vitro, sulfur can be provided by H(2)S. The polypeptide is Thiazole synthase (Legionella pneumophila (strain Paris)).